We begin with the raw amino-acid sequence, 210 residues long: Large ribosomal subunit protein uL4 (210 aa).

As to quaternary structure, part of the 50S ribosomal subunit. Post-translationally, the N-terminus is blocked.

One of the primary rRNA binding proteins, this protein initially binds near the 5'-end of the 23S rRNA. It is important during the early stages of 50S assembly. It makes multiple contacts with different domains of the 23S rRNA in the assembled 50S subunit and ribosome. Functionally, forms part of the polypeptide exit tunnel. Its function is as follows. This protein can be incorporated into E.coli ribosomes in vivo, which resulted in decreased peptidyltransferase (Ptase) activity of the hybrid ribosomes. The hybrid 50S subunits associate less well with 30S subunits to form the ribosome. The polypeptide is Large ribosomal subunit protein uL4 (rplD) (Thermus thermophilus (strain ATCC 27634 / DSM 579 / HB8)).